Consider the following 358-residue polypeptide: Heme A synthase (358 aa).

Helical transmembrane passes span 22–42 (IQVWLYSILLLCLAIVLVGGA), 107–127 (ILGRLVGLLALLGLIWFWATK), 139–159 (IVPILIAFQGAIGWWMVASGI), 173–193 (AFHLITACFIITFVTYLSRGF), 208–228 (FAGWLVVLILIEIYFGALVAG), 269–289 (FIHRFFAYFLFFVTIIHAFYV), 302–322 (AFFICVMIVVQAFLGIITLLR), and 324–344 (VPIGLGLIHQSVALAILCFSV). Residue His271 coordinates heme. Residue His332 coordinates heme.

The protein belongs to the COX15/CtaA family. Type 2 subfamily. As to quaternary structure, interacts with CtaB. It depends on heme b as a cofactor.

The protein resides in the cell membrane. The catalysed reaction is Fe(II)-heme o + 2 A + H2O = Fe(II)-heme a + 2 AH2. The protein operates within porphyrin-containing compound metabolism; heme A biosynthesis; heme A from heme O: step 1/1. Its function is as follows. Catalyzes the conversion of heme O to heme A by two successive hydroxylations of the methyl group at C8. The first hydroxylation forms heme I, the second hydroxylation results in an unstable dihydroxymethyl group, which spontaneously dehydrates, resulting in the formyl group of heme A. The protein is Heme A synthase of Bartonella quintana (strain Toulouse) (Rochalimaea quintana).